The sequence spans 315 residues: Homoserine kinase (315 aa).

96–106 (PHSRGLGSSAA) serves as a coordination point for ATP.

Belongs to the GHMP kinase family. Homoserine kinase subfamily.

It is found in the cytoplasm. The catalysed reaction is L-homoserine + ATP = O-phospho-L-homoserine + ADP + H(+). Its pathway is amino-acid biosynthesis; L-threonine biosynthesis; L-threonine from L-aspartate: step 4/5. In terms of biological role, catalyzes the ATP-dependent phosphorylation of L-homoserine to L-homoserine phosphate. This chain is Homoserine kinase, found in Mycobacterium leprae (strain Br4923).